Consider the following 179-residue polypeptide: Large ribosomal subunit protein uL5 (179 aa).

Belongs to the universal ribosomal protein uL5 family. As to quaternary structure, part of the 50S ribosomal subunit; part of the 5S rRNA/L5/L18/L25 subcomplex. Contacts the 5S rRNA and the P site tRNA. Forms a bridge to the 30S subunit in the 70S ribosome.

In terms of biological role, this is one of the proteins that bind and probably mediate the attachment of the 5S RNA into the large ribosomal subunit, where it forms part of the central protuberance. In the 70S ribosome it contacts protein S13 of the 30S subunit (bridge B1b), connecting the 2 subunits; this bridge is implicated in subunit movement. Contacts the P site tRNA; the 5S rRNA and some of its associated proteins might help stabilize positioning of ribosome-bound tRNAs. The chain is Large ribosomal subunit protein uL5 from Shewanella frigidimarina (strain NCIMB 400).